We begin with the raw amino-acid sequence, 197 residues long: Probable GTP-binding protein EngB (197 aa).

In terms of domain architecture, EngB-type G spans 25-197 (SAPEIAFAGR…VRDEFFKFTR (173 aa)). Residues 33 to 40 (GRSNVGKS), 60 to 64 (GCTRQ), 79 to 82 (DLPG), 146 to 149 (TKID), and 177 to 179 (ISV) contribute to the GTP site. Positions 40 and 62 each coordinate Mg(2+).

It belongs to the TRAFAC class TrmE-Era-EngA-EngB-Septin-like GTPase superfamily. EngB GTPase family. Mg(2+) serves as cofactor.

Its function is as follows. Necessary for normal cell division and for the maintenance of normal septation. This Wolbachia sp. subsp. Brugia malayi (strain TRS) protein is Probable GTP-binding protein EngB.